Here is a 518-residue protein sequence, read N- to C-terminus: Lysine 5,6-aminomutase alpha subunit (518 aa).

Pyridoxal 5'-phosphate-binding positions include 184-189 (RTTGQS), S238, Y263, R268, and N299.

This sequence belongs to the KamD family. In terms of assembly, heterotetramer of 2 alpha and 2 beta subunits. Adenosylcob(III)alamin is required as a cofactor. Pyridoxal 5'-phosphate serves as cofactor.

The enzyme catalyses (3S)-3,6-diaminohexanoate = (3S,5S)-3,5-diaminohexanoate. It carries out the reaction D-lysine = (2R,5S)-2,5-diaminohexanoate. The protein operates within amino-acid degradation; L-lysine degradation via acetate pathway. In terms of biological role, catalyzes the migration of the L-beta-lysine and D-lysine epsilon amino group to the delta carbon to produce 3,5-diaminohexanoate and 2,5-diaminohexanoate, respectively. This chain is Lysine 5,6-aminomutase alpha subunit, found in Fusobacterium nucleatum subsp. nucleatum (strain ATCC 25586 / DSM 15643 / BCRC 10681 / CIP 101130 / JCM 8532 / KCTC 2640 / LMG 13131 / VPI 4355).